The sequence spans 159 residues: Ubiquitin-like protein ATG12 (159 aa).

Residues 1–40 (MASPQPPFGGGSNSNSNTASPSNNLSPTASPLLEGRDSPN) are disordered. Residues 13–27 (NSNSNTASPSNNLSP) are compositionally biased toward low complexity. A Glycyl lysine isopeptide (Gly-Lys) (interchain with K-218 in ATG5) cross-link involves residue Gly-159.

The protein belongs to the ATG12 family. In terms of assembly, forms a conjugate with ATG5. Forms a thioester bond with the 'Cys-116' of ATG10. Interacts with the ATG7 C-terminal 40 amino acids domain. The ATG12-ATG5 conjugate forms a complex with several units of ATG16. The ATG12-ATG5 conjugate also associates with ATG3.

It localises to the preautophagosomal structure membrane. The protein localises to the cytoplasm. Functionally, ubiquitin-like protein involved in cytoplasm to vacuole transport (Cvt), autophagy vesicles formation, mitophagy, and nucleophagy. Conjugation with ATG5 through a ubiquitin-like conjugating system involving also ATG7 as an E1-like activating enzyme and ATG10 as an E2-like conjugating enzyme, is essential for its function. The ATG12-ATG5 conjugate acts as an E3-like enzyme which is required for lipidation of ATG8 and ATG8 association to the vesicle membranes. ATG12-ATG5 rearranges the ATG3 catalytic center and enhances its E2 activity. Plays a role in sexual development and perithecia formation. This Sordaria macrospora (strain ATCC MYA-333 / DSM 997 / K(L3346) / K-hell) protein is Ubiquitin-like protein ATG12.